Reading from the N-terminus, the 143-residue chain is Large ribosomal subunit protein uL13c (143 aa).

This sequence belongs to the universal ribosomal protein uL13 family. As to quaternary structure, part of the 50S ribosomal subunit.

The protein resides in the plastid. The protein localises to the chloroplast. This Gracilaria tenuistipitata var. liui (Red alga) protein is Large ribosomal subunit protein uL13c.